Here is a 119-residue protein sequence, read N- to C-terminus: Large ribosomal subunit protein bL20 (119 aa).

It belongs to the bacterial ribosomal protein bL20 family.

Functionally, binds directly to 23S ribosomal RNA and is necessary for the in vitro assembly process of the 50S ribosomal subunit. It is not involved in the protein synthesizing functions of that subunit. The chain is Large ribosomal subunit protein bL20 from Erythrobacter litoralis (strain HTCC2594).